The following is a 38-amino-acid chain: Alpha-2-macroglobulin homolog (38 aa).

Positions 27-30 (CGEQ) form a cross-link, isoglutamyl cysteine thioester (Cys-Gln).

It belongs to the protease inhibitor I39 (alpha-2-macroglobulin) family. Homodimer; disulfide-linked. In terms of tissue distribution, hemolymph.

It localises to the secreted. Its function is as follows. Is able to inhibit all four classes of proteinases by a unique 'trapping' mechanism. This protein has a peptide stretch, called the 'bait region' which contains specific cleavage sites for different proteinases. When a proteinase cleaves the bait region, a conformational change is induced in the protein which traps the proteinase. The entrapped enzyme remains active against low molecular weight substrates (activity against high molecular weight substrates is greatly reduced). Following cleavage in the bait region a thioester bond is hydrolyzed and mediates the covalent binding of the protein to the proteinase. This Homarus americanus (American lobster) protein is Alpha-2-macroglobulin homolog.